The following is an 81-amino-acid chain: NAD(P)H-quinone oxidoreductase subunit L (81 aa).

Helical transmembrane passes span 13–33 and 51–71; these read LLVI…IPLF and LGIY…APFL.

It belongs to the complex I NdhL subunit family. As to quaternary structure, NDH-1 can be composed of about 15 different subunits; different subcomplexes with different compositions have been identified which probably have different functions.

It is found in the cellular thylakoid membrane. It catalyses the reaction a plastoquinone + NADH + (n+1) H(+)(in) = a plastoquinol + NAD(+) + n H(+)(out). The catalysed reaction is a plastoquinone + NADPH + (n+1) H(+)(in) = a plastoquinol + NADP(+) + n H(+)(out). NDH-1 shuttles electrons from an unknown electron donor, via FMN and iron-sulfur (Fe-S) centers, to quinones in the respiratory and/or the photosynthetic chain. The immediate electron acceptor for the enzyme in this species is believed to be plastoquinone. Couples the redox reaction to proton translocation, and thus conserves the redox energy in a proton gradient. Cyanobacterial NDH-1 also plays a role in inorganic carbon-concentration. This is NAD(P)H-quinone oxidoreductase subunit L from Synechococcus sp. (strain WH7803).